The sequence spans 438 residues: Phosphoribosylamine--glycine ligase (438 aa).

The ATP-grasp domain occupies 108–316 (RTFMERNEIP…LLEVAEGIVD (209 aa)). 135–194 (VDDFGRPVVVKPIGLTGGKGVKVVGYQLRDNEEAKSYAEELIRRDGRVLIEERTNGVEFT) is an ATP binding site. Mg(2+)-binding residues include Gln274, Glu286, and Asn288. The Mn(2+) site is built by Gln274, Glu286, and Asn288.

This sequence belongs to the GARS family. Mg(2+) serves as cofactor. The cofactor is Mn(2+).

The catalysed reaction is 5-phospho-beta-D-ribosylamine + glycine + ATP = N(1)-(5-phospho-beta-D-ribosyl)glycinamide + ADP + phosphate + H(+). It participates in purine metabolism; IMP biosynthesis via de novo pathway; N(1)-(5-phospho-D-ribosyl)glycinamide from 5-phospho-alpha-D-ribose 1-diphosphate: step 2/2. The chain is Phosphoribosylamine--glycine ligase from Thermococcus gammatolerans (strain DSM 15229 / JCM 11827 / EJ3).